The chain runs to 102 residues: Cell division topological specificity factor (102 aa).

The protein belongs to the MinE family.

Its function is as follows. Prevents the cell division inhibition by proteins MinC and MinD at internal division sites while permitting inhibition at polar sites. This ensures cell division at the proper site by restricting the formation of a division septum at the midpoint of the long axis of the cell. This Synechococcus sp. (strain CC9605) protein is Cell division topological specificity factor.